The sequence spans 352 residues: Quinolinate synthase (352 aa).

Iminosuccinate is bound by residues His-48 and Ser-69. [4Fe-4S] cluster is bound at residue Cys-114. Iminosuccinate contacts are provided by residues 140-142 (YAN) and Ser-157. A [4Fe-4S] cluster-binding site is contributed by Cys-201. Iminosuccinate is bound by residues 227 to 229 (HPE) and Thr-244. A [4Fe-4S] cluster-binding site is contributed by Cys-298.

It belongs to the quinolinate synthase family. Type 1 subfamily. [4Fe-4S] cluster serves as cofactor.

It localises to the cytoplasm. It carries out the reaction iminosuccinate + dihydroxyacetone phosphate = quinolinate + phosphate + 2 H2O + H(+). It participates in cofactor biosynthesis; NAD(+) biosynthesis; quinolinate from iminoaspartate: step 1/1. Its function is as follows. Catalyzes the condensation of iminoaspartate with dihydroxyacetone phosphate to form quinolinate. The chain is Quinolinate synthase from Pseudomonas entomophila (strain L48).